Here is an 89-residue protein sequence, read N- to C-terminus: Large ribosomal subunit protein bL27 (89 aa).

The tract at residues 1 to 21 (MAHKKAGGSSRNGRDSAGRRL) is disordered.

Belongs to the bacterial ribosomal protein bL27 family.

The protein is Large ribosomal subunit protein bL27 of Novosphingobium aromaticivorans (strain ATCC 700278 / DSM 12444 / CCUG 56034 / CIP 105152 / NBRC 16084 / F199).